Reading from the N-terminus, the 9439-residue chain is Extracellular matrix-binding protein ebh (9439 aa).

FIVAR domains lie at 1815-1871, 1901-1957, 1985-2041, 2071-2127, 2155-2211, 2241-2297, 2325-2381, 2411-2467, 2488-2551, 2581-2638, 2665-2720, 2748-2804, 2832-2888, 2918-2974, 3002-3058, 3088-3144, 3172-3228, 3258-3314, 3335-3398, 3428-3484, 3512-3567, 3595-3650, 3678-3733, 3802-3860, 3928-3983, 4056-4114, 4182-4240, 4308-4365, 4433-4491, and 4559-4617; these read ARRR…VNSA, AKEQ…INDA, AYDT…VRDA, AKKR…ITSE, AYNK…VTQA, AKNR…ISSE, AYNK…VEDA, AKEK…ITEN, DTTS…VNNA, ARNR…STEI, AKNQ…IRTN, AKTA…VSDE, AYNQ…VNNA, AKEQ…ISNA, AYNQ…VTAA, AKQQ…ITNE, AYNQ…VAQA, AKNQ…ISDE, DTTE…VNNA, ARLN…ITTE, AKTA…IKTN, IKRQ…VKES, AKNR…IRQN, SMTA…IDQK, AMTQ…LDPA, AMQA…VNQK, SMGT…VDNA, AMHT…INQK, VMEQ…IEQA, and SMQT…IDQT. Positions 2495–2507 are enriched in basic and acidic residues; that stretch reads EVRKLSRRGDTNN. The segment at 2495-2514 is disordered; that stretch reads EVRKLSRRGDTNNKKPSSVS. Over residues 2925 to 2938 the composition is skewed to polar residues; sequence AVDQVPSTEGMTQQ. Positions 2925 to 2951 are disordered; it reads AVDQVPSTEGMTQQTKDDYNSKQQAAQ. Residues 4649–4674 form a disordered region; sequence GYLNDPQKSGEESLVNGSNTRSEVEE. FIVAR domains follow at residues 4685 to 4743, 4811 to 4869, 4937 to 4995, 5063 to 5115, 5189 to 5246, 5314 to 5372, 5440 to 5498, 5566 to 5624, 5692 to 5750, 5818 to 5875, 5943 to 6000, 6068 to 6126, 6194 to 6252, and 6320 to 6378; these read AMKQ…IEQK, AMQA…IEQA, AMSN…IEQA, AMEA…VLDK, AMLG…INQL, LMGA…VTTA, AMGE…IDQA, AMKK…ITNA, AMKQ…IADT, DMST…LQDL, AMKA…IKQA, KMEE…INRT, AMQQ…IQAI, and EMGT…IADA. The span at 5699–5712 shows a compositional bias: polar residues; that stretch reads QVNQDDQISNSSPF. The disordered stretch occupies residues 5699 to 5719; the sequence is QVNQDDQISNSSPFINEDSDK. Residues 6413–6434 form a disordered region; sequence NNSQRQSEHDEINSAPSRTEVS. FIVAR domains are found at residues 6446–6504, 6572–6630, 6698–6755, 6823–6877, 6949–7007, 7075–7133, 7201–7259, 7327–7384, 7452–7510, 7578–7636, 7704–7762, 7830–7888, 7956–8010, 8078–8137, 8205–8264, 8332–8391, 8459–8518, and 8587–8643; these read AMRQ…IEDA, AMKA…INRA, SMNQ…IDQA, TMKA…ANDE, AMKK…INTI, SMNT…VERA, DMKK…IENA, AMKH…IKQL, AMEN…IEHA, AMKA…INSI, AMET…VDIV, AMKS…VRQA, VMGK…TKQA, IMGE…IDTF, AMKS…IQGL, AMKD…VLGL, KMKL…IQHL, and AMQG…ANII. The chain crosses the membrane as a helical span at residues 9306–9324; it reads TVGVITLTGLLSSFWLVLA. Composition is skewed to basic and acidic residues over residues 9363 to 9375, 9386 to 9395, and 9404 to 9413; these read DKEE…DKHS, EKQLSEEDIH, and QNSDNKDTKQ. The interval 9363 to 9439 is disordered; that stretch reads DKEEQIQNDD…VVKTKKRSKK (77 aa). Residues 9414–9439 show a composition bias toward basic residues; sequence KKVTSKKKKTPQSTKKVVKTKKRSKK.

It localises to the cell membrane. The sequence is that of Extracellular matrix-binding protein ebh (ebh) from Staphylococcus epidermidis (strain ATCC 12228 / FDA PCI 1200).